We begin with the raw amino-acid sequence, 506 residues long: Histidine--tRNA ligase (506 aa).

It belongs to the class-II aminoacyl-tRNA synthetase family. In terms of assembly, homodimer.

Its subcellular location is the cytoplasm. The catalysed reaction is tRNA(His) + L-histidine + ATP = L-histidyl-tRNA(His) + AMP + diphosphate + H(+). This is Histidine--tRNA ligase (hisS) from Bradyrhizobium diazoefficiens (strain JCM 10833 / BCRC 13528 / IAM 13628 / NBRC 14792 / USDA 110).